Reading from the N-terminus, the 430-residue chain is Serine--tRNA ligase (430 aa).

The tract at residues 103–127 (LPNIPDDDVPDGRDENDNQEVSRWG) is disordered. Residue 237 to 239 (TAE) coordinates L-serine. Position 268–270 (268–270 (RSE)) interacts with ATP. E291 provides a ligand contact to L-serine. 355–358 (EISS) is an ATP binding site. Residue S391 coordinates L-serine.

Belongs to the class-II aminoacyl-tRNA synthetase family. Type-1 seryl-tRNA synthetase subfamily. As to quaternary structure, homodimer. The tRNA molecule binds across the dimer.

It is found in the cytoplasm. It carries out the reaction tRNA(Ser) + L-serine + ATP = L-seryl-tRNA(Ser) + AMP + diphosphate + H(+). The catalysed reaction is tRNA(Sec) + L-serine + ATP = L-seryl-tRNA(Sec) + AMP + diphosphate + H(+). The protein operates within aminoacyl-tRNA biosynthesis; selenocysteinyl-tRNA(Sec) biosynthesis; L-seryl-tRNA(Sec) from L-serine and tRNA(Sec): step 1/1. Functionally, catalyzes the attachment of serine to tRNA(Ser). Is also able to aminoacylate tRNA(Sec) with serine, to form the misacylated tRNA L-seryl-tRNA(Sec), which will be further converted into selenocysteinyl-tRNA(Sec). This Sodalis glossinidius (strain morsitans) protein is Serine--tRNA ligase.